A 546-amino-acid polypeptide reads, in one-letter code: 2-isopropylmalate synthase (546 aa).

The region spanning 5-274 (ITIFDTTLRD…TADVHTEHLT (270 aa)) is the Pyruvate carboxyltransferase domain. Residues aspartate 14, histidine 209, histidine 211, and asparagine 245 each contribute to the Mn(2+) site. The interval 415-546 (RLDQFSVHLS…QNGIMHTYGE (132 aa)) is regulatory domain.

Belongs to the alpha-IPM synthase/homocitrate synthase family. LeuA type 1 subfamily. As to quaternary structure, homodimer. It depends on Mn(2+) as a cofactor.

Its subcellular location is the cytoplasm. It catalyses the reaction 3-methyl-2-oxobutanoate + acetyl-CoA + H2O = (2S)-2-isopropylmalate + CoA + H(+). It functions in the pathway amino-acid biosynthesis; L-leucine biosynthesis; L-leucine from 3-methyl-2-oxobutanoate: step 1/4. Catalyzes the condensation of the acetyl group of acetyl-CoA with 3-methyl-2-oxobutanoate (2-ketoisovalerate) to form 3-carboxy-3-hydroxy-4-methylpentanoate (2-isopropylmalate). This is 2-isopropylmalate synthase from Salinibacter ruber (strain M8).